Here is a 34-residue protein sequence, read N- to C-terminus: Photosystem I reaction center subunit XII (34 aa).

The helical transmembrane segment at 11–31 (VAIAFVVALIAGIAALLLSTA) threads the bilayer.

This sequence belongs to the PsaM family. As to quaternary structure, the G.violaceus PSI reaction center is composed of one copy each of PsaA,B,C,D,E,F,L,M and Z, and forms trimeric complexes.

It is found in the cell inner membrane. The chain is Photosystem I reaction center subunit XII from Gloeobacter violaceus (strain ATCC 29082 / PCC 7421).